Here is a 291-residue protein sequence, read N- to C-terminus: 4-hydroxy-tetrahydrodipicolinate synthase (291 aa).

Thr-44 contacts pyruvate. Tyr-132 functions as the Proton donor/acceptor in the catalytic mechanism. The active-site Schiff-base intermediate with substrate is Lys-160. Ile-202 is a binding site for pyruvate.

The protein belongs to the DapA family. In terms of assembly, homotetramer; dimer of dimers.

It localises to the cytoplasm. The enzyme catalyses L-aspartate 4-semialdehyde + pyruvate = (2S,4S)-4-hydroxy-2,3,4,5-tetrahydrodipicolinate + H2O + H(+). Its pathway is amino-acid biosynthesis; L-lysine biosynthesis via DAP pathway; (S)-tetrahydrodipicolinate from L-aspartate: step 3/4. Its function is as follows. Catalyzes the condensation of (S)-aspartate-beta-semialdehyde [(S)-ASA] and pyruvate to 4-hydroxy-tetrahydrodipicolinate (HTPA). The protein is 4-hydroxy-tetrahydrodipicolinate synthase of Rhizorhabdus wittichii (strain DSM 6014 / CCUG 31198 / JCM 15750 / NBRC 105917 / EY 4224 / RW1) (Sphingomonas wittichii).